The following is a 591-amino-acid chain: Proteasome-associated ATPase (591 aa).

A coiled-coil region spans residues 8–77 (DSVAAARELE…LREEVDRLGQ (70 aa)). 278 to 283 (GCGKTL) provides a ligand contact to ATP. Residues 590-591 (YL) form a docks into pockets in the proteasome alpha-ring region.

Belongs to the AAA ATPase family. As to quaternary structure, homohexamer. Assembles into a hexameric ring structure that caps the 20S proteasome core. Strongly interacts with the prokaryotic ubiquitin-like protein Pup through a hydrophobic interface; the interacting region of ARC lies in its N-terminal coiled-coil domain. There is one Pup binding site per ARC hexamer ring. Upon ATP-binding, the C-terminus of ARC interacts with the alpha-rings of the proteasome core, possibly by binding to the intersubunit pockets.

The protein operates within protein degradation; proteasomal Pup-dependent pathway. In terms of biological role, ATPase which is responsible for recognizing, binding, unfolding and translocation of pupylated proteins into the bacterial 20S proteasome core particle. May be essential for opening the gate of the 20S proteasome via an interaction with its C-terminus, thereby allowing substrate entry and access to the site of proteolysis. Thus, the C-termini of the proteasomal ATPase may function like a 'key in a lock' to induce gate opening and therefore regulate proteolysis. This Rhodococcus jostii (strain RHA1) protein is Proteasome-associated ATPase.